The following is a 564-amino-acid chain: MASTSTTIRSHSSSRRGFSANSARLPGVSRSGFSSISVSRSRGSGGLGGACGGAGFGSRSLYGLGGSKRISIGGGSCAISGGYGSRAGGSYGFGGAGSGFGFGGGAGIGFGLGGGAGLAGGFGGPGFPVCPPGGIQEVTVNQSLLTPLNLQIDPAIQRVRAEEREQIKTLNNKFASFIDKVRFLEQQNKVLDTKWTLLQEQGTKTVRQNLEPLFEQYINNLRRQLDNIVGERGRLDSELRNMQDLVEDLKNKYEDEINKRTAAENEFVTLKKDVDAAYMNKVELQAKADTLTDEINFLRALYDAELSQMQTHISDTSVVLSMDNNRNLDLDSIIAEVKAQYEEIAQRSRAEAESWYQTKYEELQITAGRHGDDLRNTKQEIAEINRMIQRLRSEIDHVKKQCANLQAAIADAEQRGEMALKDAKNKLEGLEDALQKAKQDLARLLKEYQELMNVKLALDVEIATYRKLLEGEECRLNGEGVGQVNISVVQSTVSSGYGGASGVGSGLGLGGGSSYSYGSGLGVGGGFSSSSGRATGGGLSSVGGGSSTIKYTTTSSSSRKSYKH.

Residues 1–11 (MASTSTTIRSH) show a composition bias toward low complexity. Positions 1–23 (MASTSTTIRSHSSSRRGFSANSA) are disordered. Position 2 is an N-acetylalanine (A2). The tract at residues 2–162 (ASTSTTIRSH…DPAIQRVRAE (161 aa)) is head. Residues 163-198 (EREQIKTLNNKFASFIDKVRFLEQQNKVLDTKWTLL) are coil 1A. The IF rod domain maps to 163–476 (EREQIKTLNN…KLLEGEECRL (314 aa)). The interval 199–217 (QEQGTKTVRQNLEPLFEQY) is linker 1. Positions 218–309 (INNLRRQLDN…ALYDAELSQM (92 aa)) are coil 1B. The segment at 310-333 (QTHISDTSVVLSMDNNRNLDLDSI) is linker 12. The tract at residues 334–472 (IAEVKAQYEE…ATYRKLLEGE (139 aa)) is coil 2. Residues 473-564 (ECRLNGEGVG…SSSSRKSYKH (92 aa)) are tail. A disordered region spans residues 533-564 (RATGGGLSSVGGGSSTIKYTTTSSSSRKSYKH). Residues 534–546 (ATGGGLSSVGGGS) are compositionally biased toward gly residues. The segment covering 547-564 (STIKYTTTSSSSRKSYKH) has biased composition (low complexity).

It belongs to the intermediate filament family. Heterodimer of a type I and a type II keratin. KRT6 isomers associate with KRT16 and/or KRT17. In terms of tissue distribution, constitutively expressed in distinct types of epithelia such as those in oral mucosa, esophagus, papillae of tongue and hair follicle outer root sheath.

The chain is Keratin, type II cytoskeletal 6B (KRT6B) from Homo sapiens (Human).